The chain runs to 166 residues: Large ribosomal subunit protein uL10 (166 aa).

This sequence belongs to the universal ribosomal protein uL10 family. In terms of assembly, part of the ribosomal stalk of the 50S ribosomal subunit. The N-terminus interacts with L11 and the large rRNA to form the base of the stalk. The C-terminus forms an elongated spine to which L12 dimers bind in a sequential fashion forming a multimeric L10(L12)X complex.

Forms part of the ribosomal stalk, playing a central role in the interaction of the ribosome with GTP-bound translation factors. This chain is Large ribosomal subunit protein uL10, found in Streptococcus pneumoniae (strain ATCC 700669 / Spain 23F-1).